A 369-amino-acid chain; its full sequence is MKITAIHLYAIRLPLRNPFVISYGSYSDMPSIIVKMETDEGIIGYGEGVADDHVTGESWESTFHTLKHTLTPALIGQNPMNIEKIHDMMDNTIYGVPTAKAAIDIACFDIMGKKLNQPVYQLIGGRYHEEFPVTHVLSIADPENMAEEAASMIQKGYQSFKMKVGTNVKEDVKRIEAVRERVGNDIAIRVDVNQGWKNSANTLTALRSLGHLNIDWIEQPVIADDIDAMAHIRSKTDLPLMIDEGLKSSREMRQIIKLEAADKVNIKLMKCGGIYPAVKLAHQAEMAGIECQVGSMVESSVASSAGFHVAFSKKIITSVELTGPLKFTKDIGNLHYDVPFIRLNEKPGLGIEINEDTLQELTVFQDIVR.

Residues Tyr26, Asp51, 161–163, and 191–193 each bind substrate; these read KMK and DVN. Residues Asp191, Glu218, and Asp243 each coordinate Mg(2+). Substrate-binding positions include Lys267, 295-296, and 320-322; these read SM and ELT.

Belongs to the mandelate racemase/muconate lactonizing enzyme family. Mg(2+) serves as cofactor.

Catalyzes efficient racemization of N-succinyl-L-Arg and N-succinyl-L-Lys, suggesting that these are physiological substrates of this enzyme. Has low activity with L-Asp-L-Lys, and even lower activity with L-Leu-L-Arg, L-Leu-L-Lys, N-succinyl-L-His and N-succinyl-L-Met (in vitro). This is N-succinyl-L-Arg/Lys racemase from Bacillus cereus (strain ATCC 14579 / DSM 31 / CCUG 7414 / JCM 2152 / NBRC 15305 / NCIMB 9373 / NCTC 2599 / NRRL B-3711).